Consider the following 368-residue polypeptide: tRNA-specific 2-thiouridylase MnmA (368 aa).

ATP contacts are provided by residues 11 to 18 (GMSGGVDS) and M37. Residues 97–99 (NPD) form an interaction with target base in tRNA region. The active-site Nucleophile is the C102. Residues C102 and C199 are joined by a disulfide bond. Position 127 (G127) interacts with ATP. The segment at 149-151 (KDQ) is interaction with tRNA. C199 acts as the Cysteine persulfide intermediate in catalysis. The interaction with tRNA stretch occupies residues 311-312 (RY).

This sequence belongs to the MnmA/TRMU family. As to quaternary structure, interacts with TusE.

Its subcellular location is the cytoplasm. The catalysed reaction is S-sulfanyl-L-cysteinyl-[protein] + uridine(34) in tRNA + AH2 + ATP = 2-thiouridine(34) in tRNA + L-cysteinyl-[protein] + A + AMP + diphosphate + H(+). Catalyzes the 2-thiolation of uridine at the wobble position (U34) of tRNA(Lys), tRNA(Glu) and tRNA(Gln), leading to the formation of s(2)U34, the first step of tRNA-mnm(5)s(2)U34 synthesis. Sulfur is provided by IscS, via a sulfur-relay system. Binds ATP and its substrate tRNAs. This Klebsiella pneumoniae subsp. pneumoniae (strain ATCC 700721 / MGH 78578) protein is tRNA-specific 2-thiouridylase MnmA.